The following is a 275-amino-acid chain: Large ribosomal subunit protein uL2c (275 aa).

Residues 225 to 256 (AMNAVDHPHGGGEGRSPIGRSQPSTPWGRPAL) are disordered.

It belongs to the universal ribosomal protein uL2 family. In terms of assembly, part of the 50S ribosomal subunit.

The protein localises to the plastid. It localises to the chloroplast. The sequence is that of Large ribosomal subunit protein uL2c (rpl2) from Cyanidium caldarium (Red alga).